The sequence spans 191 residues: Thymidylate kinase (191 aa).

Position 7-14 (7-14 (GVDGAGKS)) interacts with ATP.

Belongs to the thymidylate kinase family.

The catalysed reaction is dTMP + ATP = dTDP + ADP. Its function is as follows. Phosphorylation of dTMP to form dTDP in both de novo and salvage pathways of dTTP synthesis. This Helicobacter pylori (strain P12) protein is Thymidylate kinase.